A 115-amino-acid polypeptide reads, in one-letter code: T cell receptor beta variable 12-5 (115 aa).

Residues 1–21 (MATRLLCCVVLCLLGEELIDA) form the signal peptide. Positions 22–115 (RVTQTPRHKV…SAVYFCASGL (94 aa)) constitute an Ig-like domain. C42 and C111 are oxidised to a cystine.

As to quaternary structure, alpha-beta TR is a heterodimer composed of an alpha and beta chain; disulfide-linked. The alpha-beta TR is associated with the transmembrane signaling CD3 coreceptor proteins to form the TR-CD3 (TcR or TCR). The assembly of alpha-beta TR heterodimers with CD3 occurs in the endoplasmic reticulum where a single alpha-beta TR heterodimer associates with one CD3D-CD3E heterodimer, one CD3G-CD3E heterodimer and one CD247 homodimer forming a stable octameric structure. CD3D-CD3E and CD3G-CD3E heterodimers preferentially associate with TR alpha and TR beta chains, respectively. The association of the CD247 homodimer is the last step of TcR assembly in the endoplasmic reticulum and is required for transport to the cell surface.

Its subcellular location is the cell membrane. Its function is as follows. V region of the variable domain of T cell receptor (TR) beta chain that participates in the antigen recognition. Alpha-beta T cell receptors are antigen specific receptors which are essential to the immune response and are present on the cell surface of T lymphocytes. Recognize peptide-major histocompatibility (MH) (pMH) complexes that are displayed by antigen presenting cells (APC), a prerequisite for efficient T cell adaptive immunity against pathogens. Binding of alpha-beta TR to pMH complex initiates TR-CD3 clustering on the cell surface and intracellular activation of LCK that phosphorylates the ITAM motifs of CD3G, CD3D, CD3E and CD247 enabling the recruitment of ZAP70. In turn ZAP70 phosphorylates LAT, which recruits numerous signaling molecules to form the LAT signalosome. The LAT signalosome propagates signal branching to three major signaling pathways, the calcium, the mitogen-activated protein kinase (MAPK) kinase and the nuclear factor NF-kappa-B (NF-kB) pathways, leading to the mobilization of transcription factors that are critical for gene expression and essential for T cell growth and differentiation. The T cell repertoire is generated in the thymus, by V-(D)-J rearrangement. This repertoire is then shaped by intrathymic selection events to generate a peripheral T cell pool of self-MH restricted, non-autoaggressive T cells. Post-thymic interaction of alpha-beta TR with the pMH complexes shapes TR structural and functional avidity. The polypeptide is T cell receptor beta variable 12-5 (Homo sapiens (Human)).